The following is a 233-amino-acid chain: Phosphoribosylformylglycinamidine synthase subunit PurQ (233 aa).

The Glutamine amidotransferase type-1 domain occupies 3-233; that stretch reads SAILVFPGIN…GLVAHLERAA (231 aa). The Nucleophile role is filled by C87. Residues H204 and E206 contribute to the active site.

As to quaternary structure, part of the FGAM synthase complex composed of 1 PurL, 1 PurQ and 2 PurS subunits.

The protein localises to the cytoplasm. It carries out the reaction N(2)-formyl-N(1)-(5-phospho-beta-D-ribosyl)glycinamide + L-glutamine + ATP + H2O = 2-formamido-N(1)-(5-O-phospho-beta-D-ribosyl)acetamidine + L-glutamate + ADP + phosphate + H(+). It catalyses the reaction L-glutamine + H2O = L-glutamate + NH4(+). Its pathway is purine metabolism; IMP biosynthesis via de novo pathway; 5-amino-1-(5-phospho-D-ribosyl)imidazole from N(2)-formyl-N(1)-(5-phospho-D-ribosyl)glycinamide: step 1/2. Functionally, part of the phosphoribosylformylglycinamidine synthase complex involved in the purines biosynthetic pathway. Catalyzes the ATP-dependent conversion of formylglycinamide ribonucleotide (FGAR) and glutamine to yield formylglycinamidine ribonucleotide (FGAM) and glutamate. The FGAM synthase complex is composed of three subunits. PurQ produces an ammonia molecule by converting glutamine to glutamate. PurL transfers the ammonia molecule to FGAR to form FGAM in an ATP-dependent manner. PurS interacts with PurQ and PurL and is thought to assist in the transfer of the ammonia molecule from PurQ to PurL. The polypeptide is Phosphoribosylformylglycinamidine synthase subunit PurQ (Nitrobacter hamburgensis (strain DSM 10229 / NCIMB 13809 / X14)).